The sequence spans 345 residues: Phosphoribosylformylglycinamidine cyclo-ligase (345 aa).

The protein belongs to the AIR synthase family.

The protein resides in the cytoplasm. It catalyses the reaction 2-formamido-N(1)-(5-O-phospho-beta-D-ribosyl)acetamidine + ATP = 5-amino-1-(5-phospho-beta-D-ribosyl)imidazole + ADP + phosphate + H(+). Its pathway is purine metabolism; IMP biosynthesis via de novo pathway; 5-amino-1-(5-phospho-D-ribosyl)imidazole from N(2)-formyl-N(1)-(5-phospho-D-ribosyl)glycinamide: step 2/2. The chain is Phosphoribosylformylglycinamidine cyclo-ligase from Shewanella baltica (strain OS223).